A 500-amino-acid chain; its full sequence is L-arabinose isomerase (500 aa).

Positions 306, 333, 350, and 450 each coordinate Mn(2+).

It belongs to the arabinose isomerase family. Homohexamer. The cofactor is Mn(2+).

It carries out the reaction beta-L-arabinopyranose = L-ribulose. Its pathway is carbohydrate degradation; L-arabinose degradation via L-ribulose; D-xylulose 5-phosphate from L-arabinose (bacterial route): step 1/3. Catalyzes the conversion of L-arabinose to L-ribulose. The sequence is that of L-arabinose isomerase from Yersinia pestis bv. Antiqua (strain Nepal516).